The following is a 249-amino-acid chain: MKLLVDAGNSRIKWWVPECQAHGVVDRLALDDLAGEIAAVIDISKLSSVRVSCVAGKSIETQLRGELGFARDLDVKFARVSSPLPILTVAYREIHRLGVDRWLAMLAVREKFPDRFCAVLDAGSAVTVDFVTEAGVHEGGMIVPGVQTMARALWSNTSDVAVERLELVPRWCPGVDTYDCVRQGVSALYTGLVNEVHSYIDGSAERHLSPAIVVTGGDRHWFTQAFSSPVVVDPHLVLKGLLVLDELEK.

Asp6–Lys13 lines the ATP pocket. Substrate contacts are provided by residues Phe77 and Gly98–Arg101. Catalysis depends on Asp100, which acts as the Proton acceptor. Asp121 contributes to the K(+) binding site. An ATP-binding site is contributed by Ser124. Thr177 is a substrate binding site.

The protein belongs to the type III pantothenate kinase family. As to quaternary structure, homodimer. It depends on NH4(+) as a cofactor. K(+) is required as a cofactor.

The protein localises to the cytoplasm. The enzyme catalyses (R)-pantothenate + ATP = (R)-4'-phosphopantothenate + ADP + H(+). Its pathway is cofactor biosynthesis; coenzyme A biosynthesis; CoA from (R)-pantothenate: step 1/5. Its function is as follows. Catalyzes the phosphorylation of pantothenate (Pan), the first step in CoA biosynthesis. The protein is Type III pantothenate kinase of Teredinibacter turnerae (strain ATCC 39867 / T7901).